We begin with the raw amino-acid sequence, 271 residues long: Small ribosomal subunit protein uS3 (271 aa).

Positions 40–108 (IRKFLKKRLY…TIIVNIVEVR (69 aa)) constitute a KH type-2 domain. Residues 210-271 (PTRDGVNPRE…RPQRTENKGN (62 aa)) form a disordered region. Positions 215–247 (VNPREESRKSDRRDNKRDNRRNDRRGNDRRGND) are enriched in basic and acidic residues.

It belongs to the universal ribosomal protein uS3 family. In terms of assembly, part of the 30S ribosomal subunit. Forms a tight complex with proteins S10 and S14.

In terms of biological role, binds the lower part of the 30S subunit head. Binds mRNA in the 70S ribosome, positioning it for translation. The sequence is that of Small ribosomal subunit protein uS3 from Clostridioides difficile (strain 630) (Peptoclostridium difficile).